The primary structure comprises 710 residues: Iron-sulfur clusters transporter ATM1, mitochondrial (710 aa).

Residues 1 to 38 constitute a mitochondrion transit peptide; the sequence is MWLSLPRSGYGSVATLTSKRVLACLTPLRQFSTSPAVS. Positions 35–52 are enriched in polar residues; it reads PAVSNANHKNVDNINKSP. The interval 35 to 83 is disordered; it reads PAVSNANHKNVDNINKSPANDAANNAVEKGDKPTTSPEKLATKAEKSSA. Residues 39–129 are Mitochondrial matrix-facing; it reads NANHKNVDNI…PKGKTSVKFR (91 aa). A helical transmembrane segment spans residues 130-151; sequence VLVAVALLVGAKLLNVQVPFFF. One can recognise an ABC transmembrane type-1 domain in the interval 130 to 419; that stretch reads VLVAVALLVG…LGSVYRDLRQ (290 aa). Residues 152–173 are Mitochondrial intermembrane-facing; that stretch reads KEIIDDMNIEWNSATALGVGIT. Residues 174-197 form a helical membrane-spanning segment; that stretch reads ALIFSYGAARFGAVLFGELRNAIF. At 198 to 246 the chain is on the mitochondrial matrix side; that stretch reads ASVAQKAIKEVATNVFRHLLKLDMAFHLSRQTGGITRAIDRGTKGISFV. The helical transmembrane segment at 247–270 threads the bilayer; the sequence is LSSMVFHIIPIALEISLVCGILSY. A topological domain (mitochondrial intermembrane) is located at residue Asn-271. The chain crosses the membrane as a helical span at residues 272–292; it reads FGWKYALVTGATMVSYAIFTI. The Mitochondrial matrix segment spans residues 293–358; it reads TTTSWRTKFR…ASIKIATSLA (66 aa). Residues 298–302 and 361–364 contribute to the glutathione site; these read RTKFR and NSGQ. The chain crosses the membrane as a helical span at residues 359–377; it reads FLNSGQNLIFSSALTAMMY. The Mitochondrial intermembrane portion of the chain corresponds to 378 to 392; it reads MTCCGVADGSLTVGD. Residues 393–414 traverse the membrane as a helical segment; it reads LVLVNQLVFQLSVPLNFLGSVY. Gly-411 provides a ligand contact to glutathione. At 415-710 the chain is on the mitochondrial matrix side; the sequence is RDLRQSLLDM…AEEKAAKKDV (296 aa). Positions 453–687 constitute an ABC transporter domain; the sequence is IRFENVTYGY…DGLYKSMWDA (235 aa). ATP contacts are provided by residues Tyr-462 and 486-497; that span reads GPSGSGKSTILK.

This sequence belongs to the ABC transporter superfamily. ABCB family. Heavy Metal importer (TC 3.A.1.210) subfamily. In terms of assembly, homodimer.

It is found in the mitochondrion inner membrane. Functionally, performs an essential function in the generation of cytoplasmic iron-sulfur proteins by mediating the ATP-dependent export of Fe/S cluster precursors synthesized by NFS1 and other mitochondrial proteins. Hydrolyzes ATP. Binds glutathione and may function by transporting a glutathione-conjugated iron-sulfur compound. The protein is Iron-sulfur clusters transporter ATM1, mitochondrial of Yarrowia lipolytica (strain CLIB 122 / E 150) (Yeast).